A 1068-amino-acid polypeptide reads, in one-letter code: Receptor-like protein 13 (1068 aa).

An N-terminal signal peptide occupies residues 1–23; the sequence is MEGKLFLGQYLICVILLLGQLHG. Topologically, residues 24 to 986 are extracellular; it reads YKSCIEKERK…EADESTVDME (963 aa). Asn-59 and Asn-97 each carry an N-linked (GlcNAc...) asparagine glycan. 19 LRR repeats span residues 104–129, 139–162, 164–187, 188–212, 216–239, 241–264, 265–290, 292–315, 325–349, 350–373, 375–397, 398–423, 424–447, 448–471, 472–497, 499–517, 519–543, 544–567, and 569–594; these read FEDV…LFDD, LRNL…FLNA, TSLT…EFKD, LTNL…DYNS, FRKL…FLNS, TSLK…ELRD, LTNV…LFAL, KLKA…KFAK, WKNM…LTSL, TGLR…LANL, SLEY…LLAN, LSKL…SWKP, KFQL…LLHQ, KDLH…LLEN, NTKL…AHNL, FLNV…NFGW, LPHL…LDNM, KSIE…FLKG, and YNLT…NFTR. An N-linked (GlcNAc...) asparagine glycan is attached at Asn-153. A glycan (N-linked (GlcNAc...) asparagine) is linked at Asn-202. N-linked (GlcNAc...) asparagine glycosylation is present at Asn-279. A glycan (N-linked (GlcNAc...) asparagine) is linked at Asn-397. Asn-471, Asn-482, and Asn-501 each carry an N-linked (GlcNAc...) asparagine glycan. 2 N-linked (GlcNAc...) asparagine glycosylation sites follow: Asn-570 and Asn-591. An LRR 20; degenerate repeat occupies 596–615; that stretch reads WVMSMDNNLFTGNIGKGFRS. 5 LRR repeats span residues 616-639, 641-664, 665-688, 690-710, and 711-734; these read LPSL…WIGE, QGLF…LFNI, SYLQ…VSSI, HGAV…DTLL, and LNVI…INTQ. An N-linked (GlcNAc...) asparagine glycan is attached at Asn-663. The N-linked (GlcNAc...) asparagine glycan is linked to Asn-700. N-linked (GlcNAc...) asparagine glycans are attached at residues Asn-735, Asn-745, Asn-771, Asn-780, and Asn-822. LRR repeat units follow at residues 736 to 757 and 758 to 781; these read ISIL…FCSL and SNIQ…LSNT. LRR repeat units lie at residues 846–870, 871–893, 895–918, and 920–943; these read LKLL…LGGL, VELE…SFSG, KNVE…LTDM, and SLAV…QFNT. N-linked (GlcNAc...) asparagine glycosylation is found at Asn-877 and Asn-882. Asn-925 and Asn-930 each carry an N-linked (GlcNAc...) asparagine glycan. The chain crosses the membrane as a helical span at residues 987–1007; it reads SFYWSFVAAYVTILLGILASL. Topologically, residues 1008–1068 are cytoplasmic; the sequence is SFDSPWSRAW…PPALFHKTRT (61 aa).

It belongs to the RLP family.

The protein resides in the cell membrane. The chain is Receptor-like protein 13 from Arabidopsis thaliana (Mouse-ear cress).